The following is a 1171-amino-acid chain: Pyruvate:ferredoxin oxidoreductase (1171 aa).

Pyruvate is bound by residues threonine 29 and arginine 112. CoA-binding positions include 424–428 (SDGTV), lysine 456, asparagine 556, and asparagine 598. 4Fe-4S ferredoxin-type domains are found at residues 677-706 (NIPQ…PYLA) and 733-764 (FRIQ…MVPL). Residues cysteine 686, cysteine 689, cysteine 692, cysteine 696, cysteine 742, cysteine 745, cysteine 748, cysteine 752, cysteine 809, and cysteine 812 each coordinate [4Fe-4S] cluster. Residues glutamate 814, cysteine 837, 967–969 (DGW), and 995–1000 (TEVYSN) contribute to the thiamine diphosphate site. Position 837 (cysteine 837) interacts with [4Fe-4S] cluster. Aspartate 967, threonine 995, and valine 997 together coordinate Mg(2+). Pyruvate is bound at residue asparagine 1000. A [4Fe-4S] cluster-binding site is contributed by cysteine 1075.

This sequence belongs to the pyruvate:ferredoxin/flavodoxin oxidoreductase family. As to quaternary structure, homodimer. The cofactor is [4Fe-4S] cluster. Thiamine diphosphate is required as a cofactor. Mg(2+) serves as cofactor.

It catalyses the reaction 2 oxidized [2Fe-2S]-[ferredoxin] + pyruvate + CoA = 2 reduced [2Fe-2S]-[ferredoxin] + acetyl-CoA + CO2 + H(+). Catalyzes the oxidative decarboxylation of pyruvate to acetyl-CoA and carbon dioxide. The two electrons that are generated as a result of pyruvate decarboxylation are used in the reduction of low potential ferredoxins, which provide reducing equivalents for central metabolism. Also catalyzes the reverse reaction, i.e. the synthesis of pyruvate from acetyl-CoA and carbon dioxide. Appears to function physiologically in both directions. The oxidation of pyruvate by PFOR is required to connect glycolysis and the Wood-Ljungdahl pathway of reductive acetogenesis. The conversion of acetyl-CoA to pyruvate links the Wood-Ljungdahl pathway of autotrophic CO2 fixation to the reductive tricarboxylic acid cycle. Can use methyl viologen as electron carrier in vitro. The sequence is that of Pyruvate:ferredoxin oxidoreductase from Moorella thermoacetica (strain ATCC 39073 / JCM 9320).